The following is a 176-amino-acid chain: RING-H2 finger protein ATL73 (176 aa).

The signal sequence occupies residues 1 to 16 (MARFLLATQATPTISA). A helical membrane pass occupies residues 42–62 (VIILAALLCALICALGINSVL). An RING-type; atypical zinc finger spans residues 113 to 155 (CLICLGDFVEGETVRVLPKCNHGFHVKCIDTWLLSHSSCPTCR).

Belongs to the RING-type zinc finger family. ATL subfamily.

It localises to the membrane. The enzyme catalyses S-ubiquitinyl-[E2 ubiquitin-conjugating enzyme]-L-cysteine + [acceptor protein]-L-lysine = [E2 ubiquitin-conjugating enzyme]-L-cysteine + N(6)-ubiquitinyl-[acceptor protein]-L-lysine.. It participates in protein modification; protein ubiquitination. This chain is RING-H2 finger protein ATL73 (ATL73), found in Arabidopsis thaliana (Mouse-ear cress).